The chain runs to 664 residues: Xyloglucan-specific galacturonosyltransferase 1 (664 aa).

A compositionally biased stretch (basic residues) spans 1–21; the sequence is MSLSKHLQKLVHKRESKKQPN. The tract at residues 1–49 is disordered; the sequence is MSLSKHLQKLVHKRESKKQPNKKMPVSVSKLRRPRTSKKTETGNPEKTL. Residues 1–71 are Cytoplasmic-facing; that stretch reads MSLSKHLQKL…IFSARSFLYR (71 aa). A helical; Signal-anchor for type II membrane protein transmembrane segment spans residues 72–92; the sequence is VPLTILFLFLIYLWSTSTTVI. The Lumenal portion of the chain corresponds to 93–664; it reads SGNVVHICIS…SLFKKIAKTV (572 aa). Asn126, Asn158, Asn175, Asn181, Asn355, Asn379, and Asn522 each carry an N-linked (GlcNAc...) asparagine glycan.

This sequence belongs to the glycosyltransferase 47 family. As to expression, root hair specific. Expressed in roots and young leaves.

It is found in the golgi apparatus membrane. Its function is as follows. Xyloglucan-specific galacturonosyltransferase that forms the beta-D-galactosyluronic acid-(1-&gt;2)-alpha-D-xylosyl linkage. Required for root hair development probably by providing important acidic xyloglucans. The sequence is that of Xyloglucan-specific galacturonosyltransferase 1 from Arabidopsis thaliana (Mouse-ear cress).